The sequence spans 447 residues: NADH peroxidase (447 aa).

Residues 7-11 (GSSHG), glutamate 32, cysteine 42, 110-113 (SPGA), and arginine 132 each bind FAD. Histidine 10 functions as the Proton acceptor in the catalytic mechanism. Cysteine 42 functions as the Redox-active in the catalytic mechanism. Residue cysteine 42 is modified to Cysteine sulfenic acid (-SOH). NAD(+) contacts are provided by isoleucine 160, aspartate 179, tyrosine 188, and glycine 243. Aspartate 281 provides a ligand contact to FAD. Alanine 297 provides a ligand contact to NAD(+). Alanine 299 serves as a coordination point for FAD. Glycine 328 provides a ligand contact to NAD(+).

Belongs to the class-III pyridine nucleotide-disulfide oxidoreductase family. In terms of assembly, homotetramer. The cofactor is FAD.

It carries out the reaction H2O2 + NADH + H(+) = NAD(+) + 2 H2O. Its function is as follows. Peroxidase whose active site is a redox-active cysteine-sulfenic acid. In Enterococcus faecalis (strain ATCC 700802 / V583), this protein is NADH peroxidase (npr).